A 591-amino-acid chain; its full sequence is V-type ATP synthase alpha chain (591 aa).

Position 233 to 240 (233 to 240 (GPFGAGKT)) interacts with ATP.

The protein belongs to the ATPase alpha/beta chains family.

It carries out the reaction ATP + H2O + 4 H(+)(in) = ADP + phosphate + 5 H(+)(out). Its function is as follows. Produces ATP from ADP in the presence of a proton gradient across the membrane. The V-type alpha chain is a catalytic subunit. The protein is V-type ATP synthase alpha chain of Streptococcus pyogenes serotype M12 (strain MGAS2096).